The following is a 547-amino-acid chain: MSPAGKGPAWRQPAILAAAGAAHALSFAPDPLPAWSLAPVQVIALAVAAHASLQAPSARRALARGWLFAMFSFSLGLYWLYVSMHDYGGLAAPLAAAGVLALSAFLALFPGLACAAARWLCPPHWDASPPARARRTLYTAATWAACWAALEWLRAVVLTGFPWLNIGYAHVDSPLAGWAPLLGVHGMALLAAFAAAALAGLWQSASGRIDSRQALAAGVALLLAGAGWLLGQFSWSRPEGKPLHLRLVQGNVEQSQKFDPALLETGLRRHLELASLPPRPGEPKPDLIILPETVLPVFQDQLPASVWDAWIEVARRADTRIAMGVPLHTQPDGATGHRYTNSVIGFDASTPVEQLRTGTTAMRYDKQHLVPWGEYVPPGFRWFVDMLDIPLGDFDRGAARQPSFDIAGQRIAFNICYEDLFGPELLPALQDGPDGRPGATIMANVSNLGWFGNTWALRQHLQIGRLRTMETARPMVAATNTGITAAIDARGRVAAALPAGRAGVLPVAVQGMTGLTPYARFGDKPALALIGLLLIAAAARGRRPRQP.

A run of 6 helical transmembrane segments spans residues 31 to 51, 65 to 85, 89 to 109, 144 to 164, 181 to 201, and 215 to 235; these read PLPA…AAHA, GWLF…VSMH, GLAA…LALF, AACW…FPWL, LLGV…LAGL, and LAAG…QFSW. The region spanning 248–511 is the CN hydrolase domain; it reads VQGNVEQSQK…AGVLPVAVQG (264 aa). The active-site Proton acceptor is the glutamate 292. Lysine 366 is an active-site residue. The active-site Nucleophile is cysteine 416.

This sequence belongs to the CN hydrolase family. Apolipoprotein N-acyltransferase subfamily.

The protein resides in the cell inner membrane. It catalyses the reaction N-terminal S-1,2-diacyl-sn-glyceryl-L-cysteinyl-[lipoprotein] + a glycerophospholipid = N-acyl-S-1,2-diacyl-sn-glyceryl-L-cysteinyl-[lipoprotein] + a 2-acyl-sn-glycero-3-phospholipid + H(+). The protein operates within protein modification; lipoprotein biosynthesis (N-acyl transfer). In terms of biological role, catalyzes the phospholipid dependent N-acylation of the N-terminal cysteine of apolipoprotein, the last step in lipoprotein maturation. The sequence is that of Apolipoprotein N-acyltransferase from Bordetella bronchiseptica (strain ATCC BAA-588 / NCTC 13252 / RB50) (Alcaligenes bronchisepticus).